Reading from the N-terminus, the 415-residue chain is Diaminopimelate decarboxylase (415 aa).

Lys-60 carries the post-translational modification N6-(pyridoxal phosphate)lysine. Residues Gly-239 and Glu-273 to Arg-276 contribute to the pyridoxal 5'-phosphate site. Substrate is bound by residues Arg-276, Arg-312, and Tyr-316. Cys-342 serves as the catalytic Proton donor. Substrate contacts are provided by Glu-343 and Tyr-370. Tyr-370 is a pyridoxal 5'-phosphate binding site.

This sequence belongs to the Orn/Lys/Arg decarboxylase class-II family. LysA subfamily. As to quaternary structure, homodimer. Pyridoxal 5'-phosphate is required as a cofactor.

It carries out the reaction meso-2,6-diaminopimelate + H(+) = L-lysine + CO2. The protein operates within amino-acid biosynthesis; L-lysine biosynthesis via DAP pathway; L-lysine from DL-2,6-diaminopimelate: step 1/1. In terms of biological role, specifically catalyzes the decarboxylation of meso-diaminopimelate (meso-DAP) to L-lysine. The chain is Diaminopimelate decarboxylase from Pseudomonas aeruginosa (strain ATCC 15692 / DSM 22644 / CIP 104116 / JCM 14847 / LMG 12228 / 1C / PRS 101 / PAO1).